A 356-amino-acid polypeptide reads, in one-letter code: Glycerol-3-phosphate dehydrogenase [NAD(P)+] (356 aa).

4 residues coordinate NADPH: Trp-12, Arg-32, Arg-33, and Lys-117. Residues Lys-117, Gly-151, and Ser-153 each coordinate sn-glycerol 3-phosphate. Residue Ala-155 participates in NADPH binding. Sn-glycerol 3-phosphate contacts are provided by Lys-206, Asp-265, Arg-276, and Asn-277. Lys-206 functions as the Proton acceptor in the catalytic mechanism. Arg-276 serves as a coordination point for NADPH. Leu-309 and Glu-311 together coordinate NADPH.

The protein belongs to the NAD-dependent glycerol-3-phosphate dehydrogenase family.

Its subcellular location is the cytoplasm. The catalysed reaction is sn-glycerol 3-phosphate + NAD(+) = dihydroxyacetone phosphate + NADH + H(+). The enzyme catalyses sn-glycerol 3-phosphate + NADP(+) = dihydroxyacetone phosphate + NADPH + H(+). It functions in the pathway membrane lipid metabolism; glycerophospholipid metabolism. In terms of biological role, catalyzes the reduction of the glycolytic intermediate dihydroxyacetone phosphate (DHAP) to sn-glycerol 3-phosphate (G3P), the key precursor for phospholipid synthesis. The protein is Glycerol-3-phosphate dehydrogenase [NAD(P)+] of Treponema pallidum (strain Nichols).